A 184-amino-acid polypeptide reads, in one-letter code: Photosystem I assembly protein Ycf4 (184 aa).

2 consecutive transmembrane segments (helical) span residues 24–44 (WAFI…SSYI) and 57–77 (IIFF…LFIS).

This sequence belongs to the Ycf4 family.

It is found in the plastid. Its subcellular location is the chloroplast thylakoid membrane. Seems to be required for the assembly of the photosystem I complex. This chain is Photosystem I assembly protein Ycf4, found in Buxus microphylla (Littleleaf boxwood).